Reading from the N-terminus, the 107-residue chain is uncharacterized protein (107 aa).

Polar residues predominate over residues 80-98 (SIDNLKPTSHQNGTTNDTA). The disordered stretch occupies residues 80-107 (SIDNLKPTSHQNGTTNDTATMDHLEKNE).

This is an uncharacterized protein from Human spumaretrovirus (SFVcpz(hu)).